The primary structure comprises 560 residues: Hydroxyisourate hydrolase (560 aa).

An N-terminal signal peptide occupies residues 1–31 (MMEPPQTRLMINVFIVSFLALLVNLVVGVLG). At 32–517 (ADNYSRDDFP…LEQDPITCSK (486 aa)) the chain is on the peroxisomal side. Asn-34 is a glycosylation site (N-linked (GlcNAc...) asparagine). Residues Gln-54 and 198–199 (NE) contribute to the a beta-D-glucoside site. The active-site Proton donor is the Glu-199. Cys-218 and Cys-223 are disulfide-bonded. 2 N-linked (GlcNAc...) asparagine glycosylation sites follow: Asn-226 and Asn-231. Residue Tyr-343 participates in a beta-D-glucoside binding. Asn-347 is a glycosylation site (N-linked (GlcNAc...) asparagine). A beta-D-glucoside is bound at residue Glu-408. The Nucleophile role is filled by Glu-408. An N-linked (GlcNAc...) asparagine glycan is attached at Asn-416. Residue Phe-467 coordinates a beta-D-glucoside. N-linked (GlcNAc...) asparagine glycosylation occurs at Asn-489. Residues 518 to 538 (SPIIFSKISKWVLASLLFLIQ) form a helical membrane-spanning segment. Topologically, residues 539–560 (HKIKFMWREPLPGQIPLKLVMF) are cytoplasmic.

It belongs to the glycosyl hydrolase 1 family. As to quaternary structure, monomer. Highly expressed in uninfected root nodules. Detected in leaves, stems and roots.

Its subcellular location is the peroxisome membrane. The catalysed reaction is 5-hydroxyisourate + H2O = 5-hydroxy-2-oxo-4-ureido-2,5-dihydro-1H-imidazole-5-carboxylate + H(+). The protein operates within purine metabolism; urate degradation; (S)-allantoin from urate: step 2/3. In terms of biological role, involved in the conversion of hydroxyisourate to ureides such as allantoin, the major form of nitrogen transport in legumes. The chain is Hydroxyisourate hydrolase (HIUH) from Glycine max (Soybean).